Consider the following 469-residue polypeptide: Glutamine synthetase (469 aa).

A GS beta-grasp domain is found at 14–98 (NDVKYVDLRF…VVCDVLEPTT (85 aa)). Positions 106–469 (PRGIAKKAMA…PVEFEMYYSV (364 aa)) constitute a GS catalytic domain. Residues Glu131 and Glu133 each contribute to the Mg(2+) site. Glu209 provides a ligand contact to ATP. The Mg(2+) site is built by Glu214 and Glu221. L-glutamate is bound by residues 265–266 (NG) and Gly266. His270 contributes to the Mg(2+) binding site. ATP is bound by residues 272 to 274 (HQS) and Ser274. 3 residues coordinate L-glutamate: Arg322, Glu328, and Arg340. Positions 340, 345, and 353 each coordinate ATP. Glu358 contacts Mg(2+). Arg360 lines the L-glutamate pocket. Tyr398 is modified (O-AMP-tyrosine).

Belongs to the glutamine synthetase family. As to quaternary structure, oligomer of 12 subunits arranged in the form of two hexameric ring. The cofactor is Mg(2+).

It is found in the cytoplasm. The catalysed reaction is L-glutamate + NH4(+) + ATP = L-glutamine + ADP + phosphate + H(+). Its activity is regulated as follows. The activity of this enzyme could be controlled by adenylation under conditions of abundant glutamine. Its function is as follows. Catalyzes the ATP-dependent biosynthesis of glutamine from glutamate and ammonia. In Azorhizobium caulinodans (strain ATCC 43989 / DSM 5975 / JCM 20966 / LMG 6465 / NBRC 14845 / NCIMB 13405 / ORS 571), this protein is Glutamine synthetase.